An 898-amino-acid polypeptide reads, in one-letter code: Probable LRR receptor-like serine/threonine-protein kinase At4g20450 (898 aa).

Residues 1–24 (MEGIHKLIFLALIWIFLITNIVDA) form the signal peptide. Residues 25 to 535 (QDQQGFISLD…TGPGNNKKKL (511 aa)) lie on the Extracellular side of the membrane. Asn-40, Asn-52, Asn-98, Asn-247, Asn-253, Asn-420, Asn-443, Asn-465, Asn-484, and Asn-489 each carry an N-linked (GlcNAc...) asparagine glycan. LRR repeat units lie at residues 455–477 (QLQKLDLSNNNLTGKVPEFLAKM), 479–501 (LLTFINLSGNNLSGSIPQSLLNM), and 505–526 (GLITLLYNGNNLCLDPSCESET). A helical membrane pass occupies residues 536 to 556 (LVPILASAASVGIIIAVLLLV). Topologically, residues 557–898 (NILLLRKKKP…FGPEHIPDAR (342 aa)) are cytoplasmic. Thr-582 carries the post-translational modification Phosphothreonine. The Protein kinase domain occupies 591–864 (NNFERPLGEG…QVANELQECL (274 aa)). Residues 597–605 (LGEGGFGVV) and Lys-619 contribute to the ATP site. Tyr-664 carries the phosphotyrosine modification. Asp-716 (proton acceptor) is an active-site residue. Residue Ser-750 is modified to Phosphoserine. Thr-751 is subject to Phosphothreonine. A Phosphotyrosine modification is found at Tyr-764. A disordered region spans residues 864-898 (LLTENSRKGGRHDVDSKSSLEQSTSFGPEHIPDAR). The segment covering 868–881 (NSRKGGRHDVDSKS) has biased composition (basic and acidic residues).

The protein belongs to the protein kinase superfamily. Ser/Thr protein kinase family.

It localises to the membrane. It catalyses the reaction L-seryl-[protein] + ATP = O-phospho-L-seryl-[protein] + ADP + H(+). It carries out the reaction L-threonyl-[protein] + ATP = O-phospho-L-threonyl-[protein] + ADP + H(+). The chain is Probable LRR receptor-like serine/threonine-protein kinase At4g20450 from Arabidopsis thaliana (Mouse-ear cress).